Reading from the N-terminus, the 370-residue chain is Succinoglycan biosynthesis protein ExoH (370 aa).

The next 10 helical transmembrane spans lie at 14–34 (ILLI…WSPF), 46–66 (VFLG…ISGY), 88–108 (TVLL…YAIQ), 144–164 (LYFL…ALLV), 170–190 (VTLL…IFLK), 193–213 (ILFG…IKML), 216–236 (FAAP…VGLY), 244–264 (LWLD…SWAI), 282–302 (GLSF…WMIW), and 307–327 (LSYY…ILVA). Residues 350 to 370 (AKRMATQPPQGAQAGYSPQQR) are disordered.

It belongs to the acyltransferase 3 family.

The protein localises to the cell membrane. Its pathway is glycan metabolism; exopolysaccharide biosynthesis. Required for the succinyl modification of the seventh sugar (glucose) of the octasaccharide subunit of succinoglycan (EPS I). The protein is Succinoglycan biosynthesis protein ExoH (exoH) of Rhizobium meliloti (strain 1021) (Ensifer meliloti).